The primary structure comprises 127 residues: Phosphoribosyl-AMP cyclohydrolase (127 aa).

Asp78 is a binding site for Mg(2+). Cys79 serves as a coordination point for Zn(2+). 2 residues coordinate Mg(2+): Asp80 and Asp82. Residues Cys95 and Cys102 each coordinate Zn(2+).

Belongs to the PRA-CH family. Homodimer. The cofactor is Mg(2+). Zn(2+) is required as a cofactor.

The protein resides in the cytoplasm. It carries out the reaction 1-(5-phospho-beta-D-ribosyl)-5'-AMP + H2O = 1-(5-phospho-beta-D-ribosyl)-5-[(5-phospho-beta-D-ribosylamino)methylideneamino]imidazole-4-carboxamide. The protein operates within amino-acid biosynthesis; L-histidine biosynthesis; L-histidine from 5-phospho-alpha-D-ribose 1-diphosphate: step 3/9. In terms of biological role, catalyzes the hydrolysis of the adenine ring of phosphoribosyl-AMP. This chain is Phosphoribosyl-AMP cyclohydrolase, found in Salinibacter ruber (strain DSM 13855 / M31).